Here is a 962-residue protein sequence, read N- to C-terminus: Protease 3 (962 aa).

The signal sequence occupies residues 1–23 (MPRSIWFKALLLFVALWAPLSQA). Zn(2+) is bound at residue histidine 88. Residue glutamate 91 is the Proton acceptor of the active site. Zn(2+)-binding residues include histidine 92 and glutamate 169.

It belongs to the peptidase M16 family. In terms of assembly, monomer. The cofactor is Zn(2+).

It localises to the periplasm. The enzyme catalyses Preferential cleavage of 16-Tyr-|-Leu-17 and 25-Phe-|-Tyr-26 bonds of oxidized insulin B chain. Also acts on other substrates of Mw less than 7 kDa such as insulin and glucagon.. Its function is as follows. Endopeptidase that degrades small peptides of less than 7 kDa, such as glucagon and insulin. In Escherichia coli O6:H1 (strain CFT073 / ATCC 700928 / UPEC), this protein is Protease 3 (ptrA).